A 130-amino-acid chain; its full sequence is Small ribosomal subunit protein uS9 (130 aa).

It belongs to the universal ribosomal protein uS9 family.

This chain is Small ribosomal subunit protein uS9, found in Aeromonas salmonicida (strain A449).